Consider the following 96-residue polypeptide: Neurotoxin 23 (96 aa).

An N-terminal signal peptide occupies residues 1–22 (MKNIVIIITVAVLFNLFGESLQ). The 64-residue stretch at 26-89 (FETYPLNQDD…FLAEIIDTCN (64 aa)) folds into the LCN-type CS-alpha/beta domain. 3 cysteine pairs are disulfide-bonded: cysteine 40–cysteine 63, cysteine 49–cysteine 68, and cysteine 53–cysteine 70.

It belongs to the long (3 C-C) scorpion toxin superfamily. As to expression, expressed by the venom gland.

It localises to the secreted. This chain is Neurotoxin 23, found in Lychas mucronatus (Chinese swimming scorpion).